Reading from the N-terminus, the 129-residue chain is Small ribosomal subunit protein uS11 (129 aa).

It belongs to the universal ribosomal protein uS11 family. Part of the 30S ribosomal subunit. Interacts with proteins S7 and S18. Binds to IF-3.

Its function is as follows. Located on the platform of the 30S subunit, it bridges several disparate RNA helices of the 16S rRNA. Forms part of the Shine-Dalgarno cleft in the 70S ribosome. This chain is Small ribosomal subunit protein uS11, found in Anoxybacillus flavithermus (strain DSM 21510 / WK1).